A 201-amino-acid chain; its full sequence is Recombination protein RecR (201 aa).

The C4-type zinc finger occupies 60–75 (CSRCGNVDTVDPCTVC). One can recognise a Toprim domain in the interval 83-178 (SVIIVVEDVS…KITRLAHGVP (96 aa)).

It belongs to the RecR family.

Its function is as follows. May play a role in DNA repair. It seems to be involved in an RecBC-independent recombinational process of DNA repair. It may act with RecF and RecO. The protein is Recombination protein RecR of Rhizobium etli (strain CIAT 652).